The sequence spans 55 residues: Photosystem I reaction center subunit IX (55 aa).

Residues 7–27 traverse the membrane as a helical segment; the sequence is YLSVAPVLSTLWFGSLAGLLI.

The protein belongs to the PsaJ family.

It localises to the plastid. The protein localises to the chloroplast thylakoid membrane. May help in the organization of the PsaE and PsaF subunits. This Gossypium barbadense (Sea Island cotton) protein is Photosystem I reaction center subunit IX.